Consider the following 270-residue polypeptide: Putative hydro-lyase ACIAD2519 (270 aa).

It belongs to the D-glutamate cyclase family.

The chain is Putative hydro-lyase ACIAD2519 from Acinetobacter baylyi (strain ATCC 33305 / BD413 / ADP1).